A 318-amino-acid polypeptide reads, in one-letter code: tRNA uridine(34) hydroxylase (318 aa).

One can recognise a Rhodanese domain in the interval 123 to 217; sequence EDDDTVIIDA…YGKDPETKGQ (95 aa). C177 acts as the Cysteine persulfide intermediate in catalysis.

It belongs to the TrhO family.

It catalyses the reaction uridine(34) in tRNA + AH2 + O2 = 5-hydroxyuridine(34) in tRNA + A + H2O. In terms of biological role, catalyzes oxygen-dependent 5-hydroxyuridine (ho5U) modification at position 34 in tRNAs. This chain is tRNA uridine(34) hydroxylase, found in Staphylococcus aureus (strain MRSA252).